The following is a 1610-amino-acid chain: NHS-like protein 1 (1610 aa).

Ser24 is modified (phosphoserine). A disordered region spans residues 145-169 (SPFCDDYQDEDEETDQKCSLSSSEE). Ser198 and Ser328 each carry phosphoserine. A compositionally biased stretch (polar residues) spans 433 to 448 (TAQSAGQRESKSSGSS). Disordered stretches follow at residues 433–477 (TAQS…HWNE) and 531–602 (PAHP…DAGS). A Phosphoserine modification is found at Ser568. Positions 578–594 (GYSTPTSNMSSCSLDQT) are enriched in polar residues. Residue Ser639 is modified to Phosphoserine. Positions 649 to 667 (QKNQGDRSNYQDKSLSRNI) are enriched in polar residues. Disordered stretches follow at residues 649–693 (QKNQ…KKSS), 715–778 (SLPG…SVKS), 791–981 (TGMQ…PPPE), 997–1535 (PRPA…GEGE), and 1566–1610 (EGGL…SEES). Residues 715-730 (SLPGKSGSSPSQSPCS) show a composition bias toward low complexity. 3 stretches are compositionally biased toward polar residues: residues 740-760 (SRSQSTVSAGSSMTSATTPNV), 767-778 (TPSQSDTSSVKS), and 851-865 (SPSSGYSSQSNTPTA). Residues 895–928 (SLISSVSISSSSTSLSSSTSTEGSGTMKKLDPAV) show a composition bias toward low complexity. 2 stretches are compositionally biased toward pro residues: residues 929-946 (GSPPAPPPPPVPSPPFPC) and 970-981 (PHSPVFPPPPPE). A compositionally biased stretch (low complexity) spans 1001 to 1011 (LSPILPDSPVS). Pro residues predominate over residues 1012–1031 (LPLPPPLLPSSEPPPAPPLD). The segment covering 1041–1053 (PFTNSGQPESSRG) has biased composition (polar residues). Ser1089 carries the post-translational modification Phosphoserine. Over residues 1122–1153 (SRNSTNEMESESQPASVTSSLPTPAKSSSQGD) the composition is skewed to polar residues. At Ser1167 the chain carries Phosphoserine. The span at 1180-1193 (PSPSTTPLPDSSPS) shows a compositional bias: low complexity. Position 1233 is a phosphoserine (Ser1233). 2 stretches are compositionally biased toward basic and acidic residues: residues 1240–1249 (GSVHSREAKE) and 1373–1383 (GRRDSDDDHSR). 2 positions are modified to phosphoserine: Ser1386 and Ser1388. Thr1392 carries the phosphothreonine modification. Positions 1405–1422 (QVGSIQRSIRKSSTSSDN) are enriched in polar residues. Positions 1447-1460 (KNTDPRFQRSRSEP) are enriched in basic and acidic residues. 2 stretches are compositionally biased toward low complexity: residues 1461 to 1474 (SPDAPESPSSCSPS) and 1504 to 1516 (SRTPPSAASSRYS).

The protein belongs to the NHS family. As to expression, widely expressed. Expressed in adult and fetal brain, fetal eyes, adult lens, kidney, liver and intestine.

This is NHS-like protein 1 (NHSL1) from Homo sapiens (Human).